Consider the following 252-residue polypeptide: MTQPPGQPVFIRLGPPPDEPNQFVVEGAPRSYPPDVLARLEVDAKEIIGRYPDRRSALLPLLHLVQGEDSYLTPAGLRFCADQLGLTGAEVSAVASFYTMYRRRPTGEYLVGVCTNTLCAVMGGDAIFDRLKEHLGVGHDETTSDGVVTLQHIECNAACDYAPVVMVNWEFFDNQTPESARELVDSLRSDTPKAPTRGAPLCGFRQTSRILAGLPDQRPDEGQGGPGAPTLAGLQVARKNDMQAPPTPGADE.

[2Fe-2S] cluster is bound by residues C114, C119, C155, and C159. The interval 211-252 (LAGLPDQRPDEGQGGPGAPTLAGLQVARKNDMQAPPTPGADE) is disordered.

Belongs to the complex I 24 kDa subunit family. [2Fe-2S] cluster is required as a cofactor.

The enzyme catalyses a quinone + NADH + 5 H(+)(in) = a quinol + NAD(+) + 4 H(+)(out). In terms of biological role, NDH-1 shuttles electrons from NADH, via FMN and iron-sulfur (Fe-S) centers, to quinones in the respiratory chain. The immediate electron acceptor for the enzyme in this species is believed to be menaquinone. Couples the redox reaction to proton translocation (for every two electrons transferred, four hydrogen ions are translocated across the cytoplasmic membrane), and thus conserves the redox energy in a proton gradient. The polypeptide is NADH-quinone oxidoreductase subunit E (nuoE) (Mycobacterium bovis (strain ATCC BAA-935 / AF2122/97)).